Consider the following 121-residue polypeptide: Small ribosomal subunit protein uS13 (121 aa).

Positions 97–121 (VRGQRTRTNARTRRGARKTVAGKKK) are disordered. A compositionally biased stretch (basic residues) spans 100–121 (QRTRTNARTRRGARKTVAGKKK).

This sequence belongs to the universal ribosomal protein uS13 family. As to quaternary structure, part of the 30S ribosomal subunit. Forms a loose heterodimer with protein S19. Forms two bridges to the 50S subunit in the 70S ribosome.

In terms of biological role, located at the top of the head of the 30S subunit, it contacts several helices of the 16S rRNA. In the 70S ribosome it contacts the 23S rRNA (bridge B1a) and protein L5 of the 50S subunit (bridge B1b), connecting the 2 subunits; these bridges are implicated in subunit movement. Contacts the tRNAs in the A and P-sites. This Synechococcus sp. (strain CC9605) protein is Small ribosomal subunit protein uS13.